The primary structure comprises 265 residues: Type 1 encapsulin shell protein (265 aa).

Belongs to the encapsulin family. Family 1 subfamily. In terms of assembly, multimeric. The encapsulin nanocompartment is formed by 60 subunits. Monomers form pentamers which assemble to form shells. There are 12 pores where the pentamers meet as well as 3-fold axis channels and dimer channels; none are larger than 3-4 Angstroms in diameter. The N-terminus of the protein is inside the shell, the C-terminus is outside. In terms of processing, the initiator methionine is partially removed. When isolated from culture filtrate isoelectric focusing gives 3 bands, none of which are glycosylated.

The protein localises to the encapsulin nanocompartment. It localises to the secreted. Its subcellular location is the cell membrane. Functionally, shell component of a type 1 encapsulin nanocompartment in situ; its cargo protects against oxidative stress at low pH. In situ and in E.coli assembles into proteinaceous shells about 22 nm in diameter with 2.5 nm thick walls. Cargo proteins are targeted to the interior via their C-terminal extensions; empty intact shells can be isolated in E.coli in the absence of cargo protein. There are at least 4 possible cargo proteins, DyP (encoded in the same locus), FolB, BfrB and Rv1762c; DyP and Rv1762c have been identified in vivo. Probably involved in protection against oxidative damage from the host immune response. A T-cell antigen found in bacterial culture cell filtrates, stimulates mouse immune response. Does not have detectable bacteriocin activity. This is Type 1 encapsulin shell protein from Mycobacterium tuberculosis (strain ATCC 25618 / H37Rv).